Here is a 139-residue protein sequence, read N- to C-terminus: Protein archease (139 aa).

Positions 12, 138, and 139 each coordinate Ca(2+).

The protein belongs to the archease family.

Activates the tRNA-splicing ligase complex by facilitating the enzymatic turnover of catalytic subunit RtcB. Acts by promoting the guanylylation of RtcB, a key intermediate step in tRNA ligation. Can also alter the NTP specificity of RtcB such that ATP, dGTP or ITP is used efficiently. The sequence is that of Protein archease from Saccharolobus islandicus (strain M.16.27) (Sulfolobus islandicus).